A 234-amino-acid chain; its full sequence is N-acetyl-alpha-D-glucosaminyl L-malate deacetylase 1 (234 aa).

Residues His12, Asp15, and His113 each contribute to the Zn(2+) site.

This sequence belongs to the PIGL family. In terms of assembly, homohexamer. Trimer of dimers. Zn(2+) is required as a cofactor.

The enzyme catalyses (S)-malyl N-acetyl-alpha-D-glucosaminide + H2O = (S)-malyl alpha-D-glucosaminide + acetate. Involved in bacillithiol (BSH) biosynthesis. Catalyzes the second step of the pathway, the deacetylation of N-acetylglucosaminylmalate (GlcNAc-Mal) to glucosamine malate (GlcN-Mal). The sequence is that of N-acetyl-alpha-D-glucosaminyl L-malate deacetylase 1 from Bacillus cereus (strain ATCC 14579 / DSM 31 / CCUG 7414 / JCM 2152 / NBRC 15305 / NCIMB 9373 / NCTC 2599 / NRRL B-3711).